Consider the following 393-residue polypeptide: S-adenosylmethionine synthase 2 (393 aa).

Glutamate 9 provides a ligand contact to Mg(2+). ATP is bound at residue histidine 15. Residue glutamate 43 participates in K(+) binding. Residues glutamate 56 and glutamine 99 each coordinate L-methionine. ATP contacts are provided by residues 167 to 169, 235 to 238, aspartate 246, 252 to 253, alanine 269, lysine 273, and lysine 277; these read DGK, SGRF, and RK. Aspartate 246 is an L-methionine binding site. An L-methionine-binding site is contributed by lysine 277.

It belongs to the AdoMet synthase family. Homotetramer. Requires Mn(2+) as cofactor. Mg(2+) is required as a cofactor. The cofactor is Co(2+). It depends on K(+) as a cofactor. As to expression, roots and shoots.

Its subcellular location is the cytoplasm. The catalysed reaction is L-methionine + ATP + H2O = S-adenosyl-L-methionine + phosphate + diphosphate. Its pathway is amino-acid biosynthesis; S-adenosyl-L-methionine biosynthesis; S-adenosyl-L-methionine from L-methionine: step 1/1. Functionally, catalyzes the formation of S-adenosylmethionine from methionine and ATP. The reaction comprises two steps that are both catalyzed by the same enzyme: formation of S-adenosylmethionine (AdoMet) and triphosphate, and subsequent hydrolysis of the triphosphate. This is S-adenosylmethionine synthase 2 (SAMS2) from Pinus contorta (Shore pine).